An 81-amino-acid chain; its full sequence is Cytochrome b559 subunit alpha (81 aa).

Residues 21-35 form a helical membrane-spanning segment; sequence VIHSITIPMLFIAGW. H23 is a heme binding site.

Belongs to the PsbE/PsbF family. Heterodimer of an alpha subunit and a beta subunit. PSII is composed of 1 copy each of membrane proteins PsbA, PsbB, PsbC, PsbD, PsbE, PsbF, PsbH, PsbI, PsbJ, PsbK, PsbL, PsbM, PsbT, PsbX, PsbY, PsbZ, Psb30/Ycf12, peripheral proteins PsbO, CyanoQ (PsbQ), PsbU, PsbV and a large number of cofactors. It forms dimeric complexes. The cofactor is heme b.

Its subcellular location is the cellular thylakoid membrane. Functionally, this b-type cytochrome is tightly associated with the reaction center of photosystem II (PSII). PSII is a light-driven water:plastoquinone oxidoreductase that uses light energy to abstract electrons from H(2)O, generating O(2) and a proton gradient subsequently used for ATP formation. It consists of a core antenna complex that captures photons, and an electron transfer chain that converts photonic excitation into a charge separation. This chain is Cytochrome b559 subunit alpha, found in Rippkaea orientalis (strain PCC 8801 / RF-1) (Cyanothece sp. (strain PCC 8801)).